A 224-amino-acid polypeptide reads, in one-letter code: BOS complex subunit TMEM147 (224 aa).

The chain crosses the membrane as a helical span at residues 1–21 (MTLFHFGNCFALAYFPYFITY). Residues 22-34 (KCSGLSEYNAFWK) are Cytoplasmic-facing. The helical transmembrane segment at 35–58 (CVQAGVTYLFVQLCKMLFLATFFP) threads the bilayer. Over 59–66 (TWEGGIYD) the chain is Lumenal. The chain crosses the membrane as a helical span at residues 67 to 88 (FIGEFMKASVDVADLIGLNLVM). At 89-98 (SRNAGKGEYK) the chain is on the cytoplasmic side. A helical membrane pass occupies residues 99 to 124 (IMVAALGWATAELIMSRCIPLWVGAR). Residues 125–129 (GIEFD) lie on the Lumenal side of the membrane. A helical membrane pass occupies residues 130-155 (WKYIQMSIDSNISLVHYIVASAQVWM). Over 156 to 164 (ITRYDLYHT) the chain is Cytoplasmic. The chain crosses the membrane as a helical span at residues 165 to 187 (FRPAVLLLMFLSVYKAFVMETFV). Residues 188–194 (HLCSLGS) are Lumenal-facing. Residues 195–216 (WAALLARAVVTGLLALSTLALY) form a helical membrane-spanning segment. Residues 217–224 (VAVVNVHS) are Cytoplasmic-facing.

The protein belongs to the TMEM147 family. Component of the back of Sec61 (BOS) complex, composed of NCLN/Nicalin, NOMO (NOMO1, NOMO2 or NOMO3) and TMEM147. The BOS complex is part of the multi-pass translocon (MPT) complex, composed of three subcomplexes, the GEL complex (composed of RAB5IF/OPTI and TMCO1), the BOS complex (composed of NCLN/Nicalin, NOMO and TMEM147) and the PAT complex (composed of WDR83OS/Asterix and CCDC47). The MPT complex associates with the SEC61 complex. Interacts with CHRM3, CHRM1 and AVPR2. Interacts with LBR; promoting LBR localization to the nucleus inner membrane. Interacts with DHCR7.

Its subcellular location is the endoplasmic reticulum membrane. It localises to the nucleus membrane. The protein localises to the cell membrane. Its function is as follows. Component of the multi-pass translocon (MPT) complex that mediates insertion of multi-pass membrane proteins into the lipid bilayer of membranes. The MPT complex takes over after the SEC61 complex: following membrane insertion of the first few transmembrane segments of proteins by the SEC61 complex, the MPT complex occludes the lateral gate of the SEC61 complex to promote insertion of subsequent transmembrane regions. Also acts as a negative regulator of CHRM3 function, most likely by interfering with its trafficking to the cell membrane. Negatively regulates CHRM3-mediated calcium mobilization and activation of RPS6KA1/p90RSK activity. Regulates LBR localization to the nucleus inner membrane. The protein is BOS complex subunit TMEM147 of Homo sapiens (Human).